The sequence spans 147 residues: Large ribosomal subunit protein uL13 (147 aa).

The segment at Gly126 to Gln147 is disordered.

This sequence belongs to the universal ribosomal protein uL13 family. In terms of assembly, part of the 50S ribosomal subunit.

Functionally, this protein is one of the early assembly proteins of the 50S ribosomal subunit, although it is not seen to bind rRNA by itself. It is important during the early stages of 50S assembly. The polypeptide is Large ribosomal subunit protein uL13 (Cutibacterium acnes (strain DSM 16379 / KPA171202) (Propionibacterium acnes)).